A 407-amino-acid chain; its full sequence is Putative mannan endo-1,4-beta-mannosidase 9 (407 aa).

The first 31 residues, 1-31, serve as a signal peptide directing secretion; sequence MGSKRRVILLPTLGVVVLAIAAAVLLHAGEA. Substrate contacts are provided by tryptophan 95 and asparagine 208. Residue glutamate 209 is the Proton donor of the active site. Residue tyrosine 284 participates in substrate binding. The Nucleophile role is filled by glutamate 324. Substrate is bound at residue tryptophan 366.

This sequence belongs to the glycosyl hydrolase 5 (cellulase A) family. In terms of tissue distribution, expression not detected.

It is found in the secreted. The enzyme catalyses Random hydrolysis of (1-&gt;4)-beta-D-mannosidic linkages in mannans, galactomannans and glucomannans.. The protein is Putative mannan endo-1,4-beta-mannosidase 9 (MAN9) of Oryza sativa subsp. japonica (Rice).